The sequence spans 85 residues: ATP synthase subunit c (85 aa).

Helical transmembrane passes span 22–39 and 65–85; these read AIGAGLAVIGAGLGIGKI and AALIEGVALLAVVVCLLVFFL.

It belongs to the ATPase C chain family. In terms of assembly, F-type ATPases have 2 components, F(1) - the catalytic core - and F(0) - the membrane proton channel. F(1) has five subunits: alpha(3), beta(3), gamma(1), delta(1), epsilon(1). F(0) has three main subunits: a(1), b(2) and c(10-14). The alpha and beta chains form an alternating ring which encloses part of the gamma chain. F(1) is attached to F(0) by a central stalk formed by the gamma and epsilon chains, while a peripheral stalk is formed by the delta and b chains.

The protein localises to the cell inner membrane. Functionally, f(1)F(0) ATP synthase produces ATP from ADP in the presence of a proton or sodium gradient. F-type ATPases consist of two structural domains, F(1) containing the extramembraneous catalytic core and F(0) containing the membrane proton channel, linked together by a central stalk and a peripheral stalk. During catalysis, ATP synthesis in the catalytic domain of F(1) is coupled via a rotary mechanism of the central stalk subunits to proton translocation. Its function is as follows. Key component of the F(0) channel; it plays a direct role in translocation across the membrane. A homomeric c-ring of between 10-14 subunits forms the central stalk rotor element with the F(1) delta and epsilon subunits. The chain is ATP synthase subunit c from Bacteroides thetaiotaomicron (strain ATCC 29148 / DSM 2079 / JCM 5827 / CCUG 10774 / NCTC 10582 / VPI-5482 / E50).